Consider the following 91-residue polypeptide: Cell division topological specificity factor (91 aa).

This sequence belongs to the MinE family.

Prevents the cell division inhibition by proteins MinC and MinD at internal division sites while permitting inhibition at polar sites. This ensures cell division at the proper site by restricting the formation of a division septum at the midpoint of the long axis of the cell. This is Cell division topological specificity factor from Bradyrhizobium sp. (strain BTAi1 / ATCC BAA-1182).